The sequence spans 296 residues: NAD kinase (296 aa).

The active-site Proton acceptor is the aspartate 72. Residues 72–73 (DG), 146–147 (ND), arginine 157, lysine 174, aspartate 176, 187–192 (TAYALS), and glutamine 247 contribute to the NAD(+) site.

It belongs to the NAD kinase family. The cofactor is a divalent metal cation.

The protein resides in the cytoplasm. The catalysed reaction is NAD(+) + ATP = ADP + NADP(+) + H(+). In terms of biological role, involved in the regulation of the intracellular balance of NAD and NADP, and is a key enzyme in the biosynthesis of NADP. Catalyzes specifically the phosphorylation on 2'-hydroxyl of the adenosine moiety of NAD to yield NADP. This Pseudomonas savastanoi pv. phaseolicola (strain 1448A / Race 6) (Pseudomonas syringae pv. phaseolicola (strain 1448A / Race 6)) protein is NAD kinase.